Reading from the N-terminus, the 119-residue chain is Protein yippee-like 2 (119 aa).

The Yippee domain occupies Arg-19 to Asn-116. Zn(2+) contacts are provided by Cys-23, Cys-26, Cys-79, and Cys-82.

The protein belongs to the yippee family. As to quaternary structure, may interact with FAM168B.

It localises to the nucleus. The protein resides in the nucleolus. In Chlorocebus aethiops (Green monkey), this protein is Protein yippee-like 2 (YPEL2).